A 386-amino-acid chain; its full sequence is Cell division protein FtsZ (386 aa).

GTP contacts are provided by residues 21 to 25 (GGGGN), 108 to 110 (GTG), E139, R143, and N187.

The protein belongs to the FtsZ family. Homodimer. Polymerizes to form a dynamic ring structure in a strictly GTP-dependent manner. Interacts directly with several other division proteins.

Its subcellular location is the cytoplasm. In terms of biological role, essential cell division protein that forms a contractile ring structure (Z ring) at the future cell division site. The regulation of the ring assembly controls the timing and the location of cell division. One of the functions of the FtsZ ring is to recruit other cell division proteins to the septum to produce a new cell wall between the dividing cells. Binds GTP and shows GTPase activity. In Coxiella burnetii (strain RSA 493 / Nine Mile phase I), this protein is Cell division protein FtsZ.